A 425-amino-acid chain; its full sequence is Serine--tRNA ligase (425 aa).

Position 231–233 (231–233 (TAE)) interacts with L-serine. An ATP-binding site is contributed by 262–264 (RSE). E285 contributes to the L-serine binding site. Residue 349-352 (EISS) coordinates ATP. S385 is a binding site for L-serine.

The protein belongs to the class-II aminoacyl-tRNA synthetase family. Type-1 seryl-tRNA synthetase subfamily. Homodimer. The tRNA molecule binds across the dimer.

Its subcellular location is the cytoplasm. It catalyses the reaction tRNA(Ser) + L-serine + ATP = L-seryl-tRNA(Ser) + AMP + diphosphate + H(+). The enzyme catalyses tRNA(Sec) + L-serine + ATP = L-seryl-tRNA(Sec) + AMP + diphosphate + H(+). It participates in aminoacyl-tRNA biosynthesis; selenocysteinyl-tRNA(Sec) biosynthesis; L-seryl-tRNA(Sec) from L-serine and tRNA(Sec): step 1/1. Functionally, catalyzes the attachment of serine to tRNA(Ser). Is also able to aminoacylate tRNA(Sec) with serine, to form the misacylated tRNA L-seryl-tRNA(Sec), which will be further converted into selenocysteinyl-tRNA(Sec). In Exiguobacterium sibiricum (strain DSM 17290 / CCUG 55495 / CIP 109462 / JCM 13490 / 255-15), this protein is Serine--tRNA ligase.